We begin with the raw amino-acid sequence, 475 residues long: MKSELIFLPAPAIGHLVGMVEMAKLFISRHENLSVTVFISKFYMDTGVDNYNKSLLTNPTPRLTIVNLPETDPQNYMLKPRHAILPSVIETQKTHVRDIISGMTQSESTRVVGLLADLLFINIMDIANEFNVPIYVYSPAGAGYLGLAFHLQTLYDKKQDVTEFRNSDTELLVPGFANPVPAEVLPSMYVDKEGGYDYLFSLFRRCRESKAIIINTFEELEPYAINSLRMDSMIPPIYPVGPILNLNGDGQNSDEAAVILGWLDDQPPSSVVFLCFGSYGTFQENQVKEIAMGLERSGHRFLWALRPSIPKGETKLQLKYSNLEEILPVGFLDRTSCVGKVIGWAPQVAVLGHEAVAGFMSHCGWNSTLESVWFGVPVATWPMYGEQHLNAFEMVKELGLAVEIEVDYKNEYFNTKNDFIVRAEEIETKIKKLMMDEKNSEIRKKVKEMKEKSRVAMSENGSSYNSLAKLFEEIM.

UDP-alpha-D-glucose contacts are provided by residues Ser278, 344 to 345 (WA), 362 to 370 (HCGWNSTLE), and 384 to 387 (YGEQ).

Belongs to the UDP-glycosyltransferase family.

Its pathway is secondary metabolite biosynthesis; terpenoid biosynthesis. In terms of biological role, probable component of the triterpene saponins (e.g. ginsenosides) biosynthetic pathway. No detectable activity toward protopanaxatriol (PPT). The chain is UDP-glucosyltransferase 102 (UGT102) from Panax ginseng (Korean ginseng).